We begin with the raw amino-acid sequence, 492 residues long: Transcript termination protein OPG145 (492 aa).

Residues 100 to 256 (MIELKRPLYI…NSIINIAKLS (157 aa)) enclose the Helicase ATP-binding domain. 113–120 (LACGFGKT) is a binding site for ATP. A DEAH box motif is present at residues 206 to 209 (DESH).

It belongs to the helicase family. Poxviruses subfamily. Interacts with OPG087. Might be part of a transcription complex composed at least of OPG087, OPG110, and OPG145.

Its subcellular location is the virion. Its function is as follows. DNA helicase which seems to act as a postreplicative transcription termination factor. Involved in ATP-dependent release of nascent RNA. Forms a stable complex with single-stranded DNA, and to a lesser extent RNA. This Cynomys gunnisoni (Gunnison's prairie dog) protein is Transcript termination protein OPG145 (OPG145).